Consider the following 536-residue polypeptide: C-22 sterol desaturase ERG5A (536 aa).

The chain crosses the membrane as a helical span at residues 41-61 (VWTWVFTLVALCIAYDQIAYI). A heme-binding site is contributed by Cys481.

This sequence belongs to the cytochrome P450 family. Heme serves as cofactor.

Its subcellular location is the endoplasmic reticulum membrane. The enzyme catalyses 5-dehydroepisterol + NADPH + O2 + H(+) = ergosta-5,7,22,24(28)-tetraen-3beta-ol + NADP(+) + 2 H2O. It functions in the pathway steroid metabolism; ergosterol biosynthesis. Functionally, C-22 sterol desaturase; part of the third module of ergosterol biosynthesis pathway that includes the late steps of the pathway. ERG5A and ERG5B convert 5-dehydroepisterol into ergosta-5,7,22,24(28)-tetraen-3beta-ol by forming the C-22(23) double bond in the sterol side chain. The third module or late pathway involves the ergosterol synthesis itself through consecutive reactions that mainly occur in the endoplasmic reticulum (ER) membrane. Firstly, the squalene synthase ERG9 catalyzes the condensation of 2 farnesyl pyrophosphate moieties to form squalene, which is the precursor of all steroids. Squalene synthase is crucial for balancing the incorporation of farnesyl diphosphate (FPP) into sterol and nonsterol isoprene synthesis. Secondly, squalene is converted into lanosterol by the consecutive action of the squalene epoxidase ERG1 and the lanosterol synthase ERG7. Then, the delta(24)-sterol C-methyltransferase ERG6 methylates lanosterol at C-24 to produce eburicol. Eburicol is the substrate of the sterol 14-alpha demethylase encoded by CYP51A, CYP51B and CYP51C, to yield 4,4,24-trimethyl ergosta-8,14,24(28)-trienol. CYP51B encodes the enzyme primarily responsible for sterol 14-alpha-demethylation, and plays an essential role in ascospore formation. CYP51A encodes an additional sterol 14-alpha-demethylase, induced on ergosterol depletion and responsible for the intrinsic variation in azole sensitivity. The third CYP51 isoform, CYP51C, does not encode a sterol 14-alpha-demethylase, but is required for full virulence on host wheat ears. The C-14 reductase ERG24 then reduces the C14=C15 double bond which leads to 4,4-dimethylfecosterol. A sequence of further demethylations at C-4, involving the C-4 demethylation complex containing the C-4 methylsterol oxidases ERG25, the sterol-4-alpha-carboxylate 3-dehydrogenase ERG26 and the 3-keto-steroid reductase ERG27, leads to the production of fecosterol via 4-methylfecosterol. ERG28 has a role as a scaffold to help anchor ERG25, ERG26 and ERG27 to the endoplasmic reticulum. The C-8 sterol isomerase ERG2 then catalyzes the reaction which results in unsaturation at C-7 in the B ring of sterols and thus converts fecosterol to episterol. The sterol-C5-desaturases ERG3A and ERG3BB then catalyze the introduction of a C-5 double bond in the B ring to produce 5-dehydroepisterol. The C-22 sterol desaturases ERG5A and ERG5B further convert 5-dehydroepisterol into ergosta-5,7,22,24(28)-tetraen-3beta-ol by forming the C-22(23) double bond in the sterol side chain. Finally, ergosta-5,7,22,24(28)-tetraen-3beta-ol is substrate of the C-24(28) sterol reductase ERG4 to produce ergosterol. The sequence is that of C-22 sterol desaturase ERG5A from Gibberella zeae (strain ATCC MYA-4620 / CBS 123657 / FGSC 9075 / NRRL 31084 / PH-1) (Wheat head blight fungus).